A 565-amino-acid polypeptide reads, in one-letter code: Putative lipase ATG15 (565 aa).

Topologically, residues 1–21 (MISNDYTKFSSKRRSLRYSNR) are cytoplasmic. Residues 22–42 (ILLLMGTILLIVVYFYSDILV) traverse the membrane as a helical; Signal-anchor for type II membrane protein segment. The Lumenal portion of the chain corresponds to 43–565 (DKSIIMFRNE…EYTTFTKRLI (523 aa)). Asn-217 is a glycosylation site (N-linked (GlcNAc...) asparagine). The Charge relay system role is filled by Ser-347. The tract at residues 488 to 538 (KKPKKQTTSSSSEKVDTSTTKSIDRTTITTRTNEKKWHPNPKDPSTTTTDD) is disordered. The span at 493-518 (QTTSSSSEKVDTSTTKSIDRTTITTR) shows a compositional bias: low complexity. Positions 519 to 528 (TNEKKWHPNP) are enriched in basic and acidic residues.

Belongs to the AB hydrolase superfamily. Lipase family. As to quaternary structure, binds to both phosphatidylinositol (PI) and phosphatidylinositol 3,5-bisphosphate (PIP2).

Its subcellular location is the endosome. It localises to the multivesicular body membrane. The protein resides in the prevacuolar compartment membrane. The catalysed reaction is a triacylglycerol + H2O = a diacylglycerol + a fatty acid + H(+). Functionally, lipase which is essential for lysis of subvacuolar cytoplasm to vacuole targeted bodies and intravacuolar autophagic bodies. Involved in the lysis of intravacuolar multivesicular body (MVB) vesicles. The intravacuolar membrane disintegration by ATG15 is critical to life span extension. In Vanderwaltozyma polyspora (strain ATCC 22028 / DSM 70294 / BCRC 21397 / CBS 2163 / NBRC 10782 / NRRL Y-8283 / UCD 57-17) (Kluyveromyces polysporus), this protein is Putative lipase ATG15 (ATG15).